Reading from the N-terminus, the 154-residue chain is Interleukin-2 (154 aa).

The first 20 residues, 1–20 (MYRMQLLSCIALSLALVTNS), serve as a signal peptide directing secretion. Residue Thr-23 is glycosylated (O-linked (GalNAc...) threonine). Cys-78 and Cys-126 form a disulfide bridge.

Belongs to the IL-2 family.

The protein resides in the secreted. In terms of biological role, cytokine produced by activated CD4-positive helper T-cells and to a lesser extend activated CD8-positive T-cells and natural killer (NK) cells that plays pivotal roles in the immune response and tolerance. Binds to a receptor complex composed of either the high-affinity trimeric IL-2R (IL2RA/CD25, IL2RB/CD122 and IL2RG/CD132) or the low-affinity dimeric IL-2R (IL2RB and IL2RG). Interaction with the receptor leads to oligomerization and conformation changes in the IL-2R subunits resulting in downstream signaling starting with phosphorylation of JAK1 and JAK3. In turn, JAK1 and JAK3 phosphorylate the receptor to form a docking site leading to the phosphorylation of several substrates including STAT5. This process leads to activation of several pathways including STAT, phosphoinositide-3-kinase/PI3K and mitogen-activated protein kinase/MAPK pathways. Functions as a T-cell growth factor and can increase NK-cell cytolytic activity as well. Promotes strong proliferation of activated B-cells and subsequently immunoglobulin production. Plays a pivotal role in regulating the adaptive immune system by controlling the survival and proliferation of regulatory T-cells, which are required for the maintenance of immune tolerance. Moreover, participates in the differentiation and homeostasis of effector T-cell subsets, including Th1, Th2, Th17 as well as memory CD8-positive T-cells. The protein is Interleukin-2 (IL2) of Cercocebus atys (Sooty mangabey).